We begin with the raw amino-acid sequence, 259 residues long: UPF0246 protein NGO_0461 (259 aa).

It belongs to the UPF0246 family.

The protein is UPF0246 protein NGO_0461 of Neisseria gonorrhoeae (strain ATCC 700825 / FA 1090).